Reading from the N-terminus, the 340-residue chain is Phosphoribosylformylglycinamidine cyclo-ligase (340 aa).

The protein belongs to the AIR synthase family.

It is found in the cytoplasm. It carries out the reaction 2-formamido-N(1)-(5-O-phospho-beta-D-ribosyl)acetamidine + ATP = 5-amino-1-(5-phospho-beta-D-ribosyl)imidazole + ADP + phosphate + H(+). The protein operates within purine metabolism; IMP biosynthesis via de novo pathway; 5-amino-1-(5-phospho-D-ribosyl)imidazole from N(2)-formyl-N(1)-(5-phospho-D-ribosyl)glycinamide: step 2/2. This is Phosphoribosylformylglycinamidine cyclo-ligase from Macrococcus caseolyticus (strain JCSC5402) (Macrococcoides caseolyticum).